Here is a 332-residue protein sequence, read N- to C-terminus: Ribosomal RNA small subunit methyltransferase C (332 aa).

It belongs to the methyltransferase superfamily. RsmC family. In terms of assembly, monomer.

Its subcellular location is the cytoplasm. It catalyses the reaction guanosine(1207) in 16S rRNA + S-adenosyl-L-methionine = N(2)-methylguanosine(1207) in 16S rRNA + S-adenosyl-L-homocysteine + H(+). Specifically methylates the guanine in position 1207 of 16S rRNA in the 30S particle. In Pseudomonas putida (strain GB-1), this protein is Ribosomal RNA small subunit methyltransferase C.